Reading from the N-terminus, the 387-residue chain is 3-hydroxy-D-aspartate aldolase (387 aa).

An N6-(pyridoxal phosphate)lysine modification is found at Lys62. Residue Gln85 participates in pyridoxal 5'-phosphate binding. The interval 199–228 (HGQLRGPQGQAGRRHCPGERGRGRAGGRGL) is disordered. Pyridoxal 5'-phosphate is bound by residues Thr238, 256–257 (GS), and Tyr265. Positions 355 and 357 each coordinate Mg(2+).

It belongs to the DSD1 family. Homodimer. Pyridoxal 5'-phosphate is required as a cofactor. The cofactor is Mn(2+). Requires Mg(2+) as cofactor. It depends on Co(2+) as a cofactor.

The catalysed reaction is (3S)-3-hydroxy-D-aspartate = glyoxylate + glycine. It catalyses the reaction (3R)-3-hydroxy-D-aspartate = glyoxylate + glycine. In terms of biological role, catalyzes the condensation of glyoxylate and glycine into (2R,3S)-beta-hydroxyaspartate ((3S)-3-hydroxy-D-aspartate). Functions in glyoxylate assimilation via the beta-hydroxyaspartate cycle (BHAC). In vitro catalyzes the cleavage of both D-erythro- and D-threo-3-hydroxyaspartate to glycine and glyoxylate. Also acts on D-threonine, D-3-phenylserine and D-3-3,4-methylenedioxyphenylserine. This is 3-hydroxy-D-aspartate aldolase (dhaa) from Paracoccus denitrificans.